Here is a 98-residue protein sequence, read N- to C-terminus: uncharacterized protein (98 aa).

Positions 19–31 (RRMSKRSKNKAKK) are enriched in basic residues. Residues 19–47 (RRMSKRSKNKAKKERVPVEDRPPTPMPTS) form a disordered region.

It belongs to the lymphocryptovirus BNLF2b family.

This is an uncharacterized protein from Homo sapiens (Human).